A 164-amino-acid polypeptide reads, in one-letter code: Lipoprotein signal peptidase (164 aa).

The next 3 membrane-spanning stretches (helical) occupy residues 12–32 (WLWLVVVVLIIDLGSKYLILQ), 70–90 (WFFAGIAIGISVLLAVMMYRS), and 102–122 (ALIIGGALGNLFDRLWHGFVV). Residues aspartate 123 and aspartate 141 contribute to the active site. A helical transmembrane segment spans residues 137-157 (FNLADTAICVGAALIVLEGFL).

This sequence belongs to the peptidase A8 family.

The protein localises to the cell inner membrane. The catalysed reaction is Release of signal peptides from bacterial membrane prolipoproteins. Hydrolyzes -Xaa-Yaa-Zaa-|-(S,diacylglyceryl)Cys-, in which Xaa is hydrophobic (preferably Leu), and Yaa (Ala or Ser) and Zaa (Gly or Ala) have small, neutral side chains.. It functions in the pathway protein modification; lipoprotein biosynthesis (signal peptide cleavage). Its function is as follows. This protein specifically catalyzes the removal of signal peptides from prolipoproteins. This is Lipoprotein signal peptidase from Shigella flexneri.